Reading from the N-terminus, the 585-residue chain is Cyclic nucleotide-binding domain-containing protein 2 (585 aa).

S116–R239 contacts a nucleoside 3',5'-cyclic phosphate.

The protein resides in the cytoplasm. The protein localises to the cytosol. Functionally, essential for male fertility. Plays an important role in spermatogenesis and regulates sperm motility by controlling the development of the flagellar bending of sperm. In Macaca fascicularis (Crab-eating macaque), this protein is Cyclic nucleotide-binding domain-containing protein 2 (CNBD2).